Reading from the N-terminus, the 129-residue chain is ATP synthase epsilon chain (129 aa).

The protein belongs to the ATPase epsilon chain family. In terms of assembly, F-type ATPases have 2 components, CF(1) - the catalytic core - and CF(0) - the membrane proton channel. CF(1) has five subunits: alpha(3), beta(3), gamma(1), delta(1), epsilon(1). CF(0) has three main subunits: a, b and c.

It localises to the cell inner membrane. Produces ATP from ADP in the presence of a proton gradient across the membrane. This Campylobacter curvus (strain 525.92) protein is ATP synthase epsilon chain.